Reading from the N-terminus, the 169-residue chain is Protein AIG2 B (169 aa).

15-20 (YGSFQE) is a binding site for substrate. Glutamate 83 serves as the catalytic Proton acceptor.

This sequence belongs to the gamma-glutamylcyclotransferase family. In terms of tissue distribution, expressed in roots, leaves and stems.

Putative gamma-glutamylcyclotransferase. This Arabidopsis thaliana (Mouse-ear cress) protein is Protein AIG2 B.